Reading from the N-terminus, the 97-residue chain is C-C motif chemokine 7 (97 aa).

An N-terminal signal peptide occupies residues 1 to 23; the sequence is MRISATLLCLLLIAAAFSIQVWA. Glutamine 24 bears the Pyrrolidone carboxylic acid mark. Residue asparagine 29 is glycosylated (N-linked (GlcNAc...) asparagine). 2 cysteine pairs are disulfide-bonded: cysteine 33-cysteine 57 and cysteine 34-cysteine 73.

Belongs to the intercrine beta (chemokine CC) family. As to quaternary structure, monomer. Interacts with TNFAIP6 (via Link domain).

It is found in the secreted. Functionally, chemotactic factor that attracts monocytes and eosinophils, but not neutrophils. Augments monocyte anti-tumor activity. In Mus musculus (Mouse), this protein is C-C motif chemokine 7 (Ccl7).